A 956-amino-acid chain; its full sequence is UvrABC system protein A (956 aa).

33–40 (GLSGSGKS) provides a ligand contact to ATP. The segment at 252 to 279 (CPYCGFSVGELEPRMFSFNSPFGACPTC) adopts a C4-type zinc-finger fold. 2 ABC transporter domains span residues 309–587 (WRPI…KNSI) and 607–936 (GNGL…KYLK). 639–646 (GVSGSGKS) serves as a coordination point for ATP. A C4-type zinc finger spans residues 738-764 (CEACKGDGIIKIEMHFLPDVYVPCEVC).

The protein belongs to the ABC transporter superfamily. UvrA family. As to quaternary structure, forms a heterotetramer with UvrB during the search for lesions.

The protein localises to the cytoplasm. The UvrABC repair system catalyzes the recognition and processing of DNA lesions. UvrA is an ATPase and a DNA-binding protein. A damage recognition complex composed of 2 UvrA and 2 UvrB subunits scans DNA for abnormalities. When the presence of a lesion has been verified by UvrB, the UvrA molecules dissociate. This chain is UvrABC system protein A, found in Listeria innocua serovar 6a (strain ATCC BAA-680 / CLIP 11262).